Reading from the N-terminus, the 219-residue chain is Elongation factor Ts (219 aa).

The involved in Mg(2+) ion dislocation from EF-Tu stretch occupies residues 82–85 (TDFV).

The protein belongs to the EF-Ts family.

It localises to the cytoplasm. Associates with the EF-Tu.GDP complex and induces the exchange of GDP to GTP. It remains bound to the aminoacyl-tRNA.EF-Tu.GTP complex up to the GTP hydrolysis stage on the ribosome. In Synechococcus sp. (strain CC9902), this protein is Elongation factor Ts.